The sequence spans 277 residues: Phosphate import ATP-binding protein PstB (277 aa).

Positions 31–272 (LEVPGLNLFY…PAKKQTEDYI (242 aa)) constitute an ABC transporter domain. Residue 63–70 (GPSGCGKS) coordinates ATP.

Belongs to the ABC transporter superfamily. Phosphate importer (TC 3.A.1.7) family. In terms of assembly, the complex is composed of two ATP-binding proteins (PstB), two transmembrane proteins (PstC and PstA) (Potential). PstS is missing in this species.

Its subcellular location is the cell inner membrane. It carries out the reaction phosphate(out) + ATP + H2O = ADP + 2 phosphate(in) + H(+). Part of the ABC transporter complex PstSACB involved in phosphate import. Responsible for energy coupling to the transport system. This Pseudomonas aeruginosa (strain ATCC 15692 / DSM 22644 / CIP 104116 / JCM 14847 / LMG 12228 / 1C / PRS 101 / PAO1) protein is Phosphate import ATP-binding protein PstB.